A 202-amino-acid polypeptide reads, in one-letter code: Complement component C8 gamma chain (202 aa).

A signal peptide spans 1–20; sequence MLPPGTATLLTLLLAAGSLG. The residue at position 21 (Gln-21) is a Pyrrolidone carboxylic acid. A disulfide bond links Cys-96 and Cys-188.

Belongs to the calycin superfamily. Lipocalin family. As to quaternary structure, heterotrimer of 3 chains: alpha (C8A), beta (C8B) and gamma (C8G); the alpha and gamma chains are disulfide bonded. Component of the membrane attack complex (MAC), composed of complement C5b, C6, C7, C8A, C8B, C8G and multiple copies of the pore-forming subunit C9.

It is found in the secreted. The protein resides in the target cell membrane. With respect to regulation, membrane attack complex (MAC) assembly is inhibited by CD59, thereby protecting self-cells from damage during complement activation. MAC assembly is also inhibited by clusterin (CLU) chaperones that inhibit polymerization of C9. Its function is as follows. Component of the membrane attack complex (MAC), a multiprotein complex activated by the complement cascade, which inserts into a target cell membrane and forms a pore, leading to target cell membrane rupture and cell lysis. The MAC is initiated by proteolytic cleavage of C5 into complement C5b in response to the classical, alternative, lectin and GZMK complement pathways. The complement pathways consist in a cascade of proteins that leads to phagocytosis and breakdown of pathogens and signaling that strengthens the adaptive immune system. C8G, together with C8A and C8B, inserts into the target membrane, but does not form pores by itself. During MAC assembly, associates with C5b, C6 and C7 to form the C5b8 intermediate complex that inserts into the target membrane and traverses the bilayer increasing membrane rigidity. This chain is Complement component C8 gamma chain, found in Homo sapiens (Human).